We begin with the raw amino-acid sequence, 279 residues long: Pantothenate synthetase (279 aa).

Residue 26–33 (MGNLHEGH) participates in ATP binding. The active-site Proton donor is His33. Position 57 (Gln57) interacts with (R)-pantoate. Gln57 provides a ligand contact to beta-alanine. Residue 144–147 (GKKD) coordinates ATP. (R)-pantoate is bound at residue Gln150. ATP-binding positions include Val173 and 181-184 (LSSR).

The protein belongs to the pantothenate synthetase family. In terms of assembly, homodimer.

The protein localises to the cytoplasm. It carries out the reaction (R)-pantoate + beta-alanine + ATP = (R)-pantothenate + AMP + diphosphate + H(+). It participates in cofactor biosynthesis; (R)-pantothenate biosynthesis; (R)-pantothenate from (R)-pantoate and beta-alanine: step 1/1. In terms of biological role, catalyzes the condensation of pantoate with beta-alanine in an ATP-dependent reaction via a pantoyl-adenylate intermediate. The polypeptide is Pantothenate synthetase (Burkholderia thailandensis (strain ATCC 700388 / DSM 13276 / CCUG 48851 / CIP 106301 / E264)).